A 325-amino-acid polypeptide reads, in one-letter code: Cytochrome f (325 aa).

The first 40 residues, 1–40 (MSKINLSTMWSSFIKKIAKTILVAIACISLFLTSSPAANA), serve as a signal peptide directing secretion. Positions 41, 62, 65, and 66 each coordinate heme. A helical transmembrane segment spans residues 291 to 311 (VKWLMAFFALVMLAQIMLVLK).

This sequence belongs to the cytochrome f family. The 4 large subunits of the cytochrome b6-f complex are cytochrome b6, subunit IV (17 kDa polypeptide, PetD), cytochrome f and the Rieske protein, while the 4 small subunits are PetG, PetL, PetM and PetN. The complex functions as a dimer. The cofactor is heme.

The protein resides in the cellular thylakoid membrane. In terms of biological role, component of the cytochrome b6-f complex, which mediates electron transfer between photosystem II (PSII) and photosystem I (PSI), cyclic electron flow around PSI, and state transitions. This Trichodesmium erythraeum (strain IMS101) protein is Cytochrome f.